We begin with the raw amino-acid sequence, 160 residues long: Ribosomal RNA large subunit methyltransferase H (160 aa).

S-adenosyl-L-methionine contacts are provided by residues Leu76, Gly108, and 127 to 132; that span reads LGKMTW.

Belongs to the RNA methyltransferase RlmH family. In terms of assembly, homodimer.

It is found in the cytoplasm. The enzyme catalyses pseudouridine(1915) in 23S rRNA + S-adenosyl-L-methionine = N(3)-methylpseudouridine(1915) in 23S rRNA + S-adenosyl-L-homocysteine + H(+). Its function is as follows. Specifically methylates the pseudouridine at position 1915 (m3Psi1915) in 23S rRNA. The chain is Ribosomal RNA large subunit methyltransferase H from Sinorhizobium medicae (strain WSM419) (Ensifer medicae).